We begin with the raw amino-acid sequence, 271 residues long: Pyrroline-5-carboxylate reductase (271 aa).

It belongs to the pyrroline-5-carboxylate reductase family.

It is found in the cytoplasm. It catalyses the reaction L-proline + NADP(+) = (S)-1-pyrroline-5-carboxylate + NADPH + 2 H(+). The enzyme catalyses L-proline + NAD(+) = (S)-1-pyrroline-5-carboxylate + NADH + 2 H(+). It participates in amino-acid biosynthesis; L-proline biosynthesis; L-proline from L-glutamate 5-semialdehyde: step 1/1. In terms of biological role, catalyzes the reduction of 1-pyrroline-5-carboxylate (PCA) to L-proline. This chain is Pyrroline-5-carboxylate reductase, found in Staphylococcus aureus (strain COL).